The sequence spans 264 residues: Thiazole synthase (264 aa).

The Schiff-base intermediate with DXP role is filled by Lys106. 1-deoxy-D-xylulose 5-phosphate is bound by residues Gly167, 193–194, and 215–216; these read AG and NT.

This sequence belongs to the ThiG family. In terms of assembly, homotetramer. Forms heterodimers with either ThiH or ThiS.

Its subcellular location is the cytoplasm. The catalysed reaction is [ThiS sulfur-carrier protein]-C-terminal-Gly-aminoethanethioate + 2-iminoacetate + 1-deoxy-D-xylulose 5-phosphate = [ThiS sulfur-carrier protein]-C-terminal Gly-Gly + 2-[(2R,5Z)-2-carboxy-4-methylthiazol-5(2H)-ylidene]ethyl phosphate + 2 H2O + H(+). The protein operates within cofactor biosynthesis; thiamine diphosphate biosynthesis. In terms of biological role, catalyzes the rearrangement of 1-deoxy-D-xylulose 5-phosphate (DXP) to produce the thiazole phosphate moiety of thiamine. Sulfur is provided by the thiocarboxylate moiety of the carrier protein ThiS. In vitro, sulfur can be provided by H(2)S. In Xanthomonas euvesicatoria pv. vesicatoria (strain 85-10) (Xanthomonas campestris pv. vesicatoria), this protein is Thiazole synthase.